We begin with the raw amino-acid sequence, 309 residues long: Probable manganese-dependent inorganic pyrophosphatase (309 aa).

His9, Asp13, Asp15, Asp75, His97, and Asp149 together coordinate Mn(2+).

Belongs to the PPase class C family. It depends on Mn(2+) as a cofactor.

The protein resides in the cytoplasm. It catalyses the reaction diphosphate + H2O = 2 phosphate + H(+). This chain is Probable manganese-dependent inorganic pyrophosphatase, found in Staphylococcus saprophyticus subsp. saprophyticus (strain ATCC 15305 / DSM 20229 / NCIMB 8711 / NCTC 7292 / S-41).